The primary structure comprises 152 residues: Ribosome maturation factor RimP (152 aa).

It belongs to the RimP family.

The protein resides in the cytoplasm. Functionally, required for maturation of 30S ribosomal subunits. The sequence is that of Ribosome maturation factor RimP from Porphyromonas gingivalis (strain ATCC 33277 / DSM 20709 / CIP 103683 / JCM 12257 / NCTC 11834 / 2561).